Here is a 240-residue protein sequence, read N- to C-terminus: Ribonuclease P protein component (240 aa).

The segment at 1 to 140 is disordered; the sequence is MDEKDLATQQ…KKAGGKGLVS (140 aa). Over residues 40 to 51 the composition is skewed to pro residues; it reads APPPHRVIPPHP. Residues 47 to 123 are insert; sequence IPPHPGLRQD…PGPDRDGGSK (77 aa). The segment covering 122 to 132 has biased composition (low complexity); the sequence is SKASRASSPKK.

The protein belongs to the RnpA family. As to quaternary structure, consists of a catalytic RNA component (M1 or rnpB) and a protein subunit.

It carries out the reaction Endonucleolytic cleavage of RNA, removing 5'-extranucleotides from tRNA precursor.. Its function is as follows. RNaseP catalyzes the removal of the 5'-leader sequence from pre-tRNA to produce the mature 5'-terminus. It can also cleave other RNA substrates such as 4.5S RNA. The protein component plays an auxiliary but essential role in vivo by binding to the 5'-leader sequence and broadening the substrate specificity of the ribozyme. This Thermus filiformis protein is Ribonuclease P protein component.